Consider the following 492-residue polypeptide: 3-octaprenyl-4-hydroxybenzoate carboxy-lyase (492 aa).

Position 177 (asparagine 177) interacts with Mn(2+). Residues 180–182 (IYR), 194–196 (RWL), and 199–200 (RG) each bind prenylated FMN. Glutamate 243 contacts Mn(2+). The active-site Proton donor is the aspartate 292.

Belongs to the UbiD family. As to quaternary structure, homohexamer. Prenylated FMN serves as cofactor. Mn(2+) is required as a cofactor.

It is found in the cell membrane. The catalysed reaction is a 4-hydroxy-3-(all-trans-polyprenyl)benzoate + H(+) = a 2-(all-trans-polyprenyl)phenol + CO2. It functions in the pathway cofactor biosynthesis; ubiquinone biosynthesis. Functionally, catalyzes the decarboxylation of 3-octaprenyl-4-hydroxy benzoate to 2-octaprenylphenol, an intermediate step in ubiquinone biosynthesis. The sequence is that of 3-octaprenyl-4-hydroxybenzoate carboxy-lyase from Neisseria gonorrhoeae (strain ATCC 700825 / FA 1090).